A 132-amino-acid polypeptide reads, in one-letter code: Large ribosomal subunit protein uL14 (132 aa).

It belongs to the universal ribosomal protein uL14 family. In terms of assembly, part of the 50S ribosomal subunit. Forms a cluster with proteins L3 and L24e, part of which may contact the 16S rRNA in 2 intersubunit bridges.

In terms of biological role, binds to 23S rRNA. Forms part of two intersubunit bridges in the 70S ribosome. This chain is Large ribosomal subunit protein uL14, found in Methanocaldococcus jannaschii (strain ATCC 43067 / DSM 2661 / JAL-1 / JCM 10045 / NBRC 100440) (Methanococcus jannaschii).